The sequence spans 187 residues: Transmembrane protein 11-B, mitochondrial (187 aa).

The next 2 helical transmembrane spans lie at 79-95 (TAVL…LALP) and 102-119 (VSLP…LYGI).

The protein belongs to the TMEM11 family.

The protein localises to the mitochondrion inner membrane. Plays a role in mitochondrial morphogenesis. In Xenopus laevis (African clawed frog), this protein is Transmembrane protein 11-B, mitochondrial (tmem11-b).